We begin with the raw amino-acid sequence, 218 residues long: Ribose-5-phosphate isomerase A (218 aa).

Substrate is bound by residues 28-31 (TGST), 81-84 (DGAD), and 94-97 (KGGG). The active-site Proton acceptor is the E103. Position 121 (K121) interacts with substrate.

The protein belongs to the ribose 5-phosphate isomerase family. As to quaternary structure, homodimer.

The catalysed reaction is aldehydo-D-ribose 5-phosphate = D-ribulose 5-phosphate. The protein operates within carbohydrate degradation; pentose phosphate pathway; D-ribose 5-phosphate from D-ribulose 5-phosphate (non-oxidative stage): step 1/1. Functionally, catalyzes the reversible conversion of ribose-5-phosphate to ribulose 5-phosphate. The chain is Ribose-5-phosphate isomerase A from Shewanella sediminis (strain HAW-EB3).